Consider the following 64-residue polypeptide: Conotoxin Im11.4 (64 aa).

The first 26 residues, 1 to 26 (MMFRLTSVSCILLVIAFLNLVGLTNA), serve as a signal peptide directing secretion. Cystine bridges form between C27–C41, C34–C46, C40–C50, and C45–C54. H57 carries the histidine amide modification. Residues 61-64 (ATFQ) constitute a propeptide that is removed on maturation.

Belongs to the conotoxin I2 superfamily. Expressed by the venom duct.

It is found in the secreted. The polypeptide is Conotoxin Im11.4 (Conus imperialis (Imperial cone)).